The chain runs to 137 residues: Small ribosomal subunit protein uS12 (137 aa).

It belongs to the universal ribosomal protein uS12 family. Part of the 30S ribosomal subunit. Contacts proteins S8 and S17. May interact with IF1 in the 30S initiation complex.

With S4 and S5 plays an important role in translational accuracy. In terms of biological role, interacts with and stabilizes bases of the 16S rRNA that are involved in tRNA selection in the A site and with the mRNA backbone. Located at the interface of the 30S and 50S subunits, it traverses the body of the 30S subunit contacting proteins on the other side and probably holding the rRNA structure together. The combined cluster of proteins S8, S12 and S17 appears to hold together the shoulder and platform of the 30S subunit. The protein is Small ribosomal subunit protein uS12 of Lactiplantibacillus plantarum (strain ATCC BAA-793 / NCIMB 8826 / WCFS1) (Lactobacillus plantarum).